Consider the following 545-residue polypeptide: CTP synthase (545 aa).

Residues 1 to 266 form an amidoligase domain region; the sequence is MTKNYIFITG…DDYICNYFKL (266 aa). Position 14 (Ser14) interacts with CTP. Ser14 lines the UTP pocket. ATP contacts are provided by residues 15 to 20 and Asp72; that span reads SLGKGI. 2 residues coordinate Mg(2+): Asp72 and Glu140. CTP contacts are provided by residues 147–149, 187–192, and Lys223; these read DIE and KTKPTQ. Residues 187–192 and Lys223 contribute to the UTP site; that span reads KTKPTQ. 239 to 241 contacts ATP; the sequence is KDV. Residues 291-543 form the Glutamine amidotransferase type-1 domain; it reads VIGIIGKYIK…IKSAGKHKKN (253 aa). Gly352 serves as a coordination point for L-glutamine. The Nucleophile; for glutamine hydrolysis role is filled by Cys379. L-glutamine contacts are provided by residues 380–383, Glu403, and Arg471; that span reads LGMQ. Residues His516 and Glu518 contribute to the active site.

It belongs to the CTP synthase family. Homotetramer.

The catalysed reaction is UTP + L-glutamine + ATP + H2O = CTP + L-glutamate + ADP + phosphate + 2 H(+). It catalyses the reaction L-glutamine + H2O = L-glutamate + NH4(+). The enzyme catalyses UTP + NH4(+) + ATP = CTP + ADP + phosphate + 2 H(+). Its pathway is pyrimidine metabolism; CTP biosynthesis via de novo pathway; CTP from UDP: step 2/2. Allosterically activated by GTP, when glutamine is the substrate; GTP has no effect on the reaction when ammonia is the substrate. The allosteric effector GTP functions by stabilizing the protein conformation that binds the tetrahedral intermediate(s) formed during glutamine hydrolysis. Inhibited by the product CTP, via allosteric rather than competitive inhibition. In terms of biological role, catalyzes the ATP-dependent amination of UTP to CTP with either L-glutamine or ammonia as the source of nitrogen. Regulates intracellular CTP levels through interactions with the four ribonucleotide triphosphates. The sequence is that of CTP synthase from Buchnera aphidicola subsp. Acyrthosiphon pisum (strain Tuc7).